Here is a 78-residue protein sequence, read N- to C-terminus: Exodeoxyribonuclease 7 small subunit (78 aa).

The protein belongs to the XseB family. As to quaternary structure, heterooligomer composed of large and small subunits.

Its subcellular location is the cytoplasm. It carries out the reaction Exonucleolytic cleavage in either 5'- to 3'- or 3'- to 5'-direction to yield nucleoside 5'-phosphates.. Bidirectionally degrades single-stranded DNA into large acid-insoluble oligonucleotides, which are then degraded further into small acid-soluble oligonucleotides. This Synechococcus sp. (strain JA-3-3Ab) (Cyanobacteria bacterium Yellowstone A-Prime) protein is Exodeoxyribonuclease 7 small subunit.